A 636-amino-acid polypeptide reads, in one-letter code: Chaperone protein DnaK (636 aa).

The tract at residues 579 to 636 (ELYKNAAPPPGADGQQGADGQQGADGQQGADGQQGADGQQGADGQTTESSSNDETKTN) is disordered. A compositionally biased stretch (low complexity) spans 590-623 (ADGQQGADGQQGADGQQGADGQQGADGQQGADGQ).

The protein belongs to the heat shock protein 70 family.

Its function is as follows. Acts as a chaperone. This chain is Chaperone protein DnaK, found in Nitrosopumilus maritimus (strain SCM1).